A 926-amino-acid polypeptide reads, in one-letter code: Thyroid peroxidase (926 aa).

The first 14 residues, 1–14 (MGARAVLGVTLAVA), serve as a signal peptide directing secretion. The Extracellular segment spans residues 19-844 (FFASILRRKD…TCVDAGRLPR (826 aa)). Asn129 carries N-linked (GlcNAc...) asparagine glycosylation. Residues Cys142 and Cys158 are joined by a disulfide bond. Asp238 is a binding site for heme b. Residue His239 is the Proton acceptor of the active site. Residue Asp240 coordinates Ca(2+). Disulfide bonds link Cys259–Cys269 and Cys263–Cys286. N-linked (GlcNAc...) asparagine glycosylation is found at Asn277 and Asn307. Positions 321, 323, 325, and 327 each coordinate Ca(2+). Asn342 is a glycosylation site (N-linked (GlcNAc...) asparagine). Heme b is bound by residues Glu398 and His493. 7 disulfides stabilise this stretch: Cys596-Cys653, Cys694-Cys719, Cys740-Cys780, Cys766-Cys792, Cys798-Cys812, Cys806-Cys821, and Cys823-Cys836. A Sushi domain is found at 738-793 (DACGFPDPVEDGGFLLCEERGQRVLVFSCRHGFRLRGPAQITCTPRGWDSPPPLCK). One can recognise an EGF-like; calcium-binding domain in the interval 794–837 (DINECEDETDPPCHASARCKNTKGGVLCECSDPLVLGEDGRTCV). Residues 845–869 (ASVVSIALGAVLVCGLAGLAWTVVC) form a helical membrane-spanning segment. The Cytoplasmic segment spans residues 870 to 926 (RWTHADARPLLPVGEGEGDGKSPSLPLPGCGNRRDVGAAPALEVEQDLSCGSRGLCE).

This sequence belongs to the peroxidase family. XPO subfamily. In terms of assembly, interacts with DUOX1, DUOX2 and CYBA. Ca(2+) serves as cofactor. Requires heme b as cofactor. Heme is covalently bound through a H(2)O(2)-dependent autocatalytic process. Heme insertion is important for the delivery of protein at the cell surface. Post-translationally, cleaved in its N-terminal part. In terms of processing, N-glycosylated; contains mannose and N-acetylglucosamine.

It localises to the membrane. It carries out the reaction 2 iodide + H2O2 + 2 H(+) = diiodine + 2 H2O. The enzyme catalyses [thyroglobulin]-L-tyrosine + iodide + H2O2 + H(+) = [thyroglobulin]-3-iodo-L-tyrosine + 2 H2O. The catalysed reaction is [thyroglobulin]-3-iodo-L-tyrosine + iodide + H2O2 + H(+) = [thyroglobulin]-3,5-diiodo-L-tyrosine + 2 H2O. It catalyses the reaction 2 [thyroglobulin]-3,5-diiodo-L-tyrosine + H2O2 = [thyroglobulin]-L-thyroxine + [thyroglobulin]-dehydroalanine + 2 H2O. It carries out the reaction [thyroglobulin]-3-iodo-L-tyrosine + [thyroglobulin]-3,5-diiodo-L-tyrosine + H2O2 = [thyroglobulin]-3,3',5-triiodo-L-thyronine + [thyroglobulin]-dehydroalanine + 2 H2O. It functions in the pathway hormone biosynthesis; thyroid hormone biosynthesis. Functionally, iodination and coupling of the hormonogenic tyrosines in thyroglobulin to yield the thyroid hormones T(3) and T(4). The protein is Thyroid peroxidase (TPO) of Sus scrofa (Pig).